The following is a 268-amino-acid chain: Small ribosomal subunit protein eS1 (268 aa).

The interval 1 to 21 (MAVGKNKGLSKGGKKGGKKKV) is disordered.

This sequence belongs to the eukaryotic ribosomal protein eS1 family. In terms of assembly, component of the small ribosomal subunit. Mature ribosomes consist of a small (40S) and a large (60S) subunit. The 40S subunit contains about 33 different proteins and 1 molecule of RNA (18S). The 60S subunit contains about 49 different proteins and 3 molecules of RNA (28S, 5.8S and 5S).

It localises to the cytoplasm. In terms of biological role, essential for oogenesis; required for late follicle cell development. The sequence is that of Small ribosomal subunit protein eS1 from Drosophila erecta (Fruit fly).